Here is a 257-residue protein sequence, read N- to C-terminus: MDVIPAIDLLEGRCVRLYQGNYQQSEVYNENPVEVARQWADEGATRLHLVDLDGAKQGHPVNLDTIEAIVRAISIPVQVGGGLRDRQSIAQLIDLGVDRTIVGTVAVENPSLVQELCQAFPSKIAVGIDARNGKVATRGWLETSEVLATELAQQMAELGVSAIIYTDIHRDGTLQGPNREALRELANHIKIPVIASGGVSSLSDVLGLLALEPIGVTGVIIGKALYTGDVSLAEAVHAVGPGRWQDIPPDLGSSAFG.

Asp8 acts as the Proton acceptor in catalysis. The active-site Proton donor is the Asp129.

Belongs to the HisA/HisF family.

It is found in the cytoplasm. The catalysed reaction is 1-(5-phospho-beta-D-ribosyl)-5-[(5-phospho-beta-D-ribosylamino)methylideneamino]imidazole-4-carboxamide = 5-[(5-phospho-1-deoxy-D-ribulos-1-ylimino)methylamino]-1-(5-phospho-beta-D-ribosyl)imidazole-4-carboxamide. It participates in amino-acid biosynthesis; L-histidine biosynthesis; L-histidine from 5-phospho-alpha-D-ribose 1-diphosphate: step 4/9. The sequence is that of 1-(5-phosphoribosyl)-5-[(5-phosphoribosylamino)methylideneamino] imidazole-4-carboxamide isomerase from Crocosphaera subtropica (strain ATCC 51142 / BH68) (Cyanothece sp. (strain ATCC 51142)).